The chain runs to 120 residues: Non-specific lipid-transfer protein (120 aa).

A signal peptide spans 1 to 26; it reads MGVLRSSFVAMMVMYMVLATTPNAEA. Intrachain disulfides connect Cys30/Cys79, Cys40/Cys56, Cys57/Cys102, and Cys77/Cys116.

The protein belongs to the plant LTP family. Expressed in protoderm cells of somatic and zygotic embryos, and transiently expressed in epidermal cell layers of leaves, flowers and seeds.

Its function is as follows. Plant non-specific lipid-transfer proteins transfer phospholipids as well as galactolipids across membranes. May play a role in wax or cutin deposition in the cell walls of expanding epidermal cells and certain secretory tissues. The sequence is that of Non-specific lipid-transfer protein (EP2) from Daucus carota (Wild carrot).